The sequence spans 415 residues: Gamma-glutamyl phosphate reductase (415 aa).

Belongs to the gamma-glutamyl phosphate reductase family.

The protein localises to the cytoplasm. The enzyme catalyses L-glutamate 5-semialdehyde + phosphate + NADP(+) = L-glutamyl 5-phosphate + NADPH + H(+). The protein operates within amino-acid biosynthesis; L-proline biosynthesis; L-glutamate 5-semialdehyde from L-glutamate: step 2/2. Its function is as follows. Catalyzes the NADPH-dependent reduction of L-glutamate 5-phosphate into L-glutamate 5-semialdehyde and phosphate. The product spontaneously undergoes cyclization to form 1-pyrroline-5-carboxylate. The chain is Gamma-glutamyl phosphate reductase from Listeria innocua serovar 6a (strain ATCC BAA-680 / CLIP 11262).